Here is a 268-residue protein sequence, read N- to C-terminus: Tryptophan synthase alpha chain (268 aa).

Active-site proton acceptor residues include Glu49 and Asp60.

This sequence belongs to the TrpA family. Tetramer of two alpha and two beta chains.

The catalysed reaction is (1S,2R)-1-C-(indol-3-yl)glycerol 3-phosphate + L-serine = D-glyceraldehyde 3-phosphate + L-tryptophan + H2O. It participates in amino-acid biosynthesis; L-tryptophan biosynthesis; L-tryptophan from chorismate: step 5/5. Its function is as follows. The alpha subunit is responsible for the aldol cleavage of indoleglycerol phosphate to indole and glyceraldehyde 3-phosphate. This Escherichia coli O81 (strain ED1a) protein is Tryptophan synthase alpha chain.